A 475-amino-acid polypeptide reads, in one-letter code: ATP synthase subunit beta, chloroplastic (475 aa).

Position 156-163 (156-163 (GGAGVGKT)) interacts with ATP.

This sequence belongs to the ATPase alpha/beta chains family. F-type ATPases have 2 components, CF(1) - the catalytic core - and CF(0) - the membrane proton channel. CF(1) has five subunits: alpha(3), beta(3), gamma(1), delta(1), epsilon(1). CF(0) has four main subunits: a(1), b(1), b'(1) and c(9-12).

It is found in the plastid. Its subcellular location is the chloroplast thylakoid membrane. The catalysed reaction is ATP + H2O + 4 H(+)(in) = ADP + phosphate + 5 H(+)(out). Its function is as follows. Produces ATP from ADP in the presence of a proton gradient across the membrane. The catalytic sites are hosted primarily by the beta subunits. This is ATP synthase subunit beta, chloroplastic from Trieres chinensis (Marine centric diatom).